The following is a 27-amino-acid chain: SIFVLPDLPYAKDALPKISAKTFDFGK.

This sequence belongs to the iron/manganese superoxide dismutase family. In terms of assembly, homodimer. Requires Mn(2+) as cofactor.

The enzyme catalyses 2 superoxide + 2 H(+) = H2O2 + O2. Functionally, destroys superoxide anion radicals which are normally produced within the cells and which are toxic to biological systems. This chain is Superoxide dismutase [Mn] (sodA), found in Desulfovibrio desulfuricans.